The sequence spans 503 residues: Aminoaldehyde dehydrogenase 1, peroxisomal (503 aa).

Positions 28, 99, and 189 each coordinate Na(+). Residue 238 to 245 (GSTMTGSK) participates in NAD(+) binding. Catalysis depends on Glu260, which acts as the Proton acceptor. Residues Cys294 and Glu393 each coordinate NAD(+). The active-site Nucleophile is Cys294.

The protein belongs to the aldehyde dehydrogenase family. In terms of tissue distribution, expressed in leaves, flowers and fruits.

The protein localises to the cytoplasm. The protein resides in the cytosol. It catalyses the reaction 4-aminobutanal + NAD(+) + H2O = 4-aminobutanoate + NADH + 2 H(+). It carries out the reaction 3-aminopropanal + NAD(+) + H2O = beta-alanine + NADH + 2 H(+). Its pathway is amine and polyamine biosynthesis; betaine biosynthesis via choline pathway; betaine from betaine aldehyde: step 1/1. In terms of biological role, dehydrogenase that catalyzes the oxidation of several aminoaldehydes. Metabolizes and detoxifies aldehyde products of polyamine degradation to non-toxic amino acids. Catalyzes the oxidation of 4-aminobutanal and 3-aminopropanal to 4-aminobutanoate and beta-alanine, respectively. The polypeptide is Aminoaldehyde dehydrogenase 1, peroxisomal (Malus domestica (Apple)).